Consider the following 213-residue polypeptide: Phosphoribosyl-dephospho-CoA transferase (213 aa).

Residues Asp-135 and Asp-137 contribute to the active site.

Belongs to the MdcG family.

It catalyses the reaction apo-[malonate decarboxylase ACP] + 2'-(5''-triphospho-alpha-D-ribosyl)-3'-dephospho-CoA = holo-[malonate decarboxylase ACP] + diphosphate. Transfers 2'-(5-triphosphoribosyl)-3'-dephosphocoenzyme-A to the apo-[acyl-carrier-protein] of the malonate decarboxylase to yield holo-[acyl-carrier-protein]. This is Phosphoribosyl-dephospho-CoA transferase from Xanthomonas axonopodis pv. citri (strain 306).